The following is a 356-amino-acid chain: MEERTVTLEIPEVLKRQLEDDCYYINRRKRLVQLPCHTNIITILESYVKHFAISAAFSANERPRHHHAMPHASMNVPYIPAEKNIDLCKEMVDGLRITFDYTLPLVLLYPYEQAQYKKVTASKVFLAIKESATNTNRSQEKLSPSLRLLNPSRPQSTESQSTSGEPATPKRRKAEPQAVQSLRRSSPHTANCDRLSKSSTSPQPKRWQQDMSTSVPKLFLHLEKKTPVHSRSSSPTLTPSQEGSPVFAGFEGRRTNEINEVLSWKLVPDNYPPGDQPPPPSYIYGAQHLLRLFVKLPEILGKMSFTEKNLKALLKHFDLFVRFLAEYHDDFFPESAYVAASEVHYSTRNPQAVNKC.

The 349-residue stretch at E2–P350 folds into the MRG domain. 2 disordered regions span residues T135–D210 and K225–F247. The segment covering L142–S156 has biased composition (low complexity). 2 stretches are compositionally biased toward polar residues: residues A178 to T189 and H229 to G243.

It is found in the nucleus. In terms of biological role, probable non-catalytic component of the MSL histone acetyltransferase complex, a multiprotein complex that mediates the majority of histone H4 acetylation at 'Lys-16' (H4K16ac), an epigenetic mark that prevents chromatin compaction. The protein is MSL complex subunit 3B of Homo sapiens (Human).